The sequence spans 295 residues: Small ribosomal subunit protein uS2 (295 aa).

A disordered region spans residues 263 to 295; the sequence is KKFSKTKNIDEETNTEFEQALNDADENKNSDNA.

Belongs to the universal ribosomal protein uS2 family.

This chain is Small ribosomal subunit protein uS2, found in Rickettsia massiliae (strain Mtu5).